A 361-amino-acid polypeptide reads, in one-letter code: uncharacterized protein (361 aa).

An N-terminal signal peptide occupies residues 1–17 (MNLFIYVLLLSIWTSSC). Topologically, residues 18 to 47 (LDRNESNGSATAVTTHAEFKQTKLQELRRR) are extracellular. N-linked (GlcNAc...) asparagine glycosylation is present at Asn-24. The helical transmembrane segment at 48–68 (LLIIVIGTLITGYMVSCTCLL) threads the bilayer. The Cytoplasmic portion of the chain corresponds to 69–361 (HYSCDSEEAH…EDIYKNSRNN (293 aa)). Residues 95-106 (SSKISFTDSKSP) show a composition bias toward polar residues. Positions 95 to 197 (SSKISFTDSK…SQVSPSYPEK (103 aa)) are disordered. The segment covering 144 to 158 (PSSQKKPSKPSAPKK) has biased composition (low complexity). Over residues 169-185 (HRTRSPKKAHRQAHAHK) the composition is skewed to basic residues.

It localises to the membrane. This is an uncharacterized protein from Bos taurus (Bovine).